A 121-amino-acid polypeptide reads, in one-letter code: MGNLIKELQDEQCRTDLVDFCVGDTIRVATNISEGGKERVQVFQGTVMARKGGGAGETVSLHRVAYGEGMEKSFLLNSPKVVSIEVVKRGKVSRARLFYLRGKTGKAAKVKELIGPRAAKK.

This sequence belongs to the bacterial ribosomal protein bL19 family.

In terms of biological role, this protein is located at the 30S-50S ribosomal subunit interface and may play a role in the structure and function of the aminoacyl-tRNA binding site. The protein is Large ribosomal subunit protein bL19 (rplS) of Chlamydia muridarum (strain MoPn / Nigg).